The chain runs to 442 residues: tRNA modification GTPase MnmE (442 aa).

Residues R21, E79, and K118 each coordinate (6S)-5-formyl-5,6,7,8-tetrahydrofolate. A TrmE-type G domain is found at 214-367 (GFKIAIVGKP…LKEELQNYLN (154 aa)). N224 contacts K(+). GTP-binding positions include 224-229 (NVGKSS), 243-249 (SDIAGTT), and 268-271 (DTAG). S228 is a Mg(2+) binding site. K(+) contacts are provided by S243, I245, and T248. T249 contacts Mg(2+). A (6S)-5-formyl-5,6,7,8-tetrahydrofolate-binding site is contributed by K442.

Belongs to the TRAFAC class TrmE-Era-EngA-EngB-Septin-like GTPase superfamily. TrmE GTPase family. Homodimer. Heterotetramer of two MnmE and two MnmG subunits. The cofactor is K(+).

It is found in the cytoplasm. Exhibits a very high intrinsic GTPase hydrolysis rate. Involved in the addition of a carboxymethylaminomethyl (cmnm) group at the wobble position (U34) of certain tRNAs, forming tRNA-cmnm(5)s(2)U34. The polypeptide is tRNA modification GTPase MnmE (Campylobacter jejuni subsp. jejuni serotype O:2 (strain ATCC 700819 / NCTC 11168)).